Consider the following 493-residue polypeptide: Glutamate--tRNA ligase (493 aa).

Positions 9-19 match the 'HIGH' region motif; that stretch reads PSPTGFVHIGS. A 'KMSKS' region motif is present at residues 258–262; it reads KLSKR. ATP is bound at residue K261.

Belongs to the class-I aminoacyl-tRNA synthetase family. Glutamate--tRNA ligase type 1 subfamily. Monomer.

The protein localises to the cytoplasm. It carries out the reaction tRNA(Glu) + L-glutamate + ATP = L-glutamyl-tRNA(Glu) + AMP + diphosphate. Catalyzes the attachment of glutamate to tRNA(Glu) in a two-step reaction: glutamate is first activated by ATP to form Glu-AMP and then transferred to the acceptor end of tRNA(Glu). This Clostridioides difficile (strain 630) (Peptoclostridium difficile) protein is Glutamate--tRNA ligase.